Consider the following 198-residue polypeptide: Recombination protein RecR (198 aa).

A C4-type zinc finger spans residues 57-72; the sequence is CSVCGNLTDEDPCAIC. A Toprim domain is found at 80–175; sequence STILIVEDSR…KVTRLARGLA (96 aa).

This sequence belongs to the RecR family.

In terms of biological role, may play a role in DNA repair. It seems to be involved in an RecBC-independent recombinational process of DNA repair. It may act with RecF and RecO. The polypeptide is Recombination protein RecR (Streptococcus sanguinis (strain SK36)).